The primary structure comprises 229 residues: 2-C-methyl-D-erythritol 4-phosphate cytidylyltransferase (229 aa).

It belongs to the IspD/TarI cytidylyltransferase family. IspD subfamily.

It carries out the reaction 2-C-methyl-D-erythritol 4-phosphate + CTP + H(+) = 4-CDP-2-C-methyl-D-erythritol + diphosphate. Its pathway is isoprenoid biosynthesis; isopentenyl diphosphate biosynthesis via DXP pathway; isopentenyl diphosphate from 1-deoxy-D-xylulose 5-phosphate: step 2/6. Functionally, catalyzes the formation of 4-diphosphocytidyl-2-C-methyl-D-erythritol from CTP and 2-C-methyl-D-erythritol 4-phosphate (MEP). The sequence is that of 2-C-methyl-D-erythritol 4-phosphate cytidylyltransferase from Neisseria meningitidis serogroup B (strain ATCC BAA-335 / MC58).